The following is a 387-amino-acid chain: Norsolorinic acid reductase stcV (387 aa).

Aspartate 69 is a binding site for NADP(+). The Proton donor role is filled by tyrosine 74. Histidine 148 provides a ligand contact to substrate. Residues 178 to 179 (SD), glutamine 204, 233 to 243 (GALGRGQYKSA), and 301 to 309 (RTVEQLEAN) each bind NADP(+).

It belongs to the aldo/keto reductase family. Aldo/keto reductase 2 subfamily.

Its pathway is mycotoxin biosynthesis; sterigmatocystin biosynthesis. In terms of biological role, norsolorinic acid reductase; part of the gene cluster that mediates the biosynthesis of sterigmatocystin (ST), a polyketide-derived furanocoumarin which is part of the most toxic and carcinogenic compounds among the known mycotoxins. The first step in the biosynthesis of sterigmatocystin is the production of hexanoate by the fatty acid synthase (FAS) units stcJ and stcK. The polyketide backbone is assembled by the non-reducing polyketide synthase stcA by condensation of the starter hexanoyl-CoA and 7 malonyl-CoA extender units followed by cyclization and release of norsolorinic acid. Norsolorinic acid is the first stable intermediate in the biosynthesis of sterigmatocystin and is converted into averantin (AVN) by the ketoreductase stcE which reduces the hexanoate ketone to an alcohol. Averantin is then oxidized into 5'-hydroxyaverantin (HAVN) by the cytochrome P450 monooxygenase stcF. 5'-hydroxyaverantin is further converted to 5'-oxyaverantin (OAVN) by the 5'-hydroxyaverantin dehydrogenase stcG. The next step is the conversion of OAVN into averufin (AVF) which is catalyzed by a yet to be identified enzyme. The cytochrome P450 monooxygenase stcB and the flavin-binding monooxygenase stcW are both required for the conversion of averufin to 1-hydroxyversicolorone. The esterase stcI probably catalyzes the formation of versiconal hemiacetal acetate from 1-hydroxyversicolorone. The oxydoreductase stcN then probably catalyzes the biosynthetic step from versiconal to versicolorin B (VERB). The next step is performed by the versicolorin B desaturase stcL to produce versicolorin A (VERA). The ketoreductase stcU and the cytochrome P450 monooxygenase stcS are involved in the conversion of versicolorin A to demethylsterigmatocystin. The Baeyer-Villiger oxidas stcQ and the reductase stcR might be involved in the biosynthetic step from versicolorin A to demethylsterigmatocystin. The final step in the biosynthesis of sterigmatocystin is the methylation of demethylsterigmatocystin catalyzed by the methyltransferase stcP. In Emericella nidulans (strain FGSC A4 / ATCC 38163 / CBS 112.46 / NRRL 194 / M139) (Aspergillus nidulans), this protein is Norsolorinic acid reductase stcV.